The sequence spans 311 residues: Dihydroorotate dehydrogenase B (NAD(+)), catalytic subunit (311 aa).

Residues K52, 76–80, and N133 each bind substrate; that span reads NAMGL. 52–53 provides a ligand contact to FMN; sequence KS. N133 serves as a coordination point for FMN. The active-site Nucleophile is the C136. K171 and I197 together coordinate FMN. 198–199 is a binding site for substrate; it reads NT. FMN-binding positions include G223, 249–250, and 271–272; these read GG and GS.

This sequence belongs to the dihydroorotate dehydrogenase family. Type 1 subfamily. As to quaternary structure, heterotetramer of 2 PyrK and 2 PyrD type B subunits. The cofactor is FMN.

It is found in the cytoplasm. It carries out the reaction (S)-dihydroorotate + NAD(+) = orotate + NADH + H(+). Its pathway is pyrimidine metabolism; UMP biosynthesis via de novo pathway; orotate from (S)-dihydroorotate (NAD(+) route): step 1/1. Catalyzes the conversion of dihydroorotate to orotate with NAD(+) as electron acceptor. The polypeptide is Dihydroorotate dehydrogenase B (NAD(+)), catalytic subunit (pyrD) (Methanosarcina acetivorans (strain ATCC 35395 / DSM 2834 / JCM 12185 / C2A)).